The chain runs to 682 residues: Tail-specific protease (682 aa).

The signal sequence occupies residues 1–22; sequence MNMFFRLTALAGLLAIAGQTFA. The region spanning 238–322 is the PDZ domain; sequence NTEMSLSLEG…SKVRLEILPA (85 aa). Active-site charge relay system residues include Ser452, Asp463, and Lys477. The segment covering 635–650 has biased composition (basic and acidic residues); sequence GKPELKKLDDLPKDYQ. The tract at residues 635–654 is disordered; the sequence is GKPELKKLDDLPKDYQEPDP.

It belongs to the peptidase S41A family.

The protein localises to the cell inner membrane. The catalysed reaction is The enzyme shows specific recognition of a C-terminal tripeptide, Xaa-Yaa-Zaa, in which Xaa is preferably Ala or Leu, Yaa is preferably Ala or Tyr, and Zaa is preferably Ala, but then cleaves at a variable distance from the C-terminus. A typical cleavage is -Ala-Ala-|-Arg-Ala-Ala-Lys-Glu-Asn-Tyr-Ala-Leu-Ala-Ala.. Functionally, involved in the cleavage of a C-terminal peptide of 11 residues from the precursor form of penicillin-binding protein 3 (PBP3). May be involved in protection of the bacterium from thermal and osmotic stresses. This chain is Tail-specific protease (prc), found in Escherichia coli (strain K12).